The sequence spans 279 residues: Probable endonuclease 4 (279 aa).

Zn(2+)-binding residues include His-69, His-109, Glu-145, Asp-179, His-182, His-216, Asp-229, His-231, and Glu-261.

Belongs to the AP endonuclease 2 family. Requires Zn(2+) as cofactor.

It catalyses the reaction Endonucleolytic cleavage to 5'-phosphooligonucleotide end-products.. Endonuclease IV plays a role in DNA repair. It cleaves phosphodiester bonds at apurinic or apyrimidinic (AP) sites, generating a 3'-hydroxyl group and a 5'-terminal sugar phosphate. The protein is Probable endonuclease 4 of Serratia proteamaculans (strain 568).